The primary structure comprises 351 residues: Large ribosomal subunit protein uL3 (351 aa).

Disordered stretches follow at residues 1 to 31 and 246 to 271; these read MGHR…TPRT and KGSR…GQLG.

This sequence belongs to the universal ribosomal protein uL3 family. In terms of assembly, part of the 50S ribosomal subunit. Forms a cluster with proteins L14 and L24e.

Its function is as follows. One of the primary rRNA binding proteins, it binds directly near the 3'-end of the 23S rRNA, where it nucleates assembly of the 50S subunit. The protein is Large ribosomal subunit protein uL3 of Saccharolobus solfataricus (strain ATCC 35092 / DSM 1617 / JCM 11322 / P2) (Sulfolobus solfataricus).